The following is a 63-amino-acid chain: Large ribosomal subunit protein uL29 (63 aa).

It belongs to the universal ribosomal protein uL29 family.

In Shewanella halifaxensis (strain HAW-EB4), this protein is Large ribosomal subunit protein uL29.